A 121-amino-acid polypeptide reads, in one-letter code: Protein yippee-like 5 (121 aa).

One can recognise a Yippee domain in the interval R13–E110. C17, C20, C73, and C76 together coordinate Zn(2+). A Phosphoserine modification is found at S118.

Belongs to the yippee family. In terms of assembly, identified in the CTLH complex that contains GID4, RANBP9 and/or RANBP10, MKLN1, MAEA, RMND5A (or alternatively its paralog RMND5B), GID8, ARMC8, WDR26 and YPEL5. Within this complex, MAEA, RMND5A (or alternatively its paralog RMND5B), GID8, WDR26, and RANBP9 and/or RANBP10 form the catalytic core, while GID4, MKLN1, ARMC8 and YPEL5 have ancillary roles. Interacts with RANBP9 and RANBP10.

It localises to the nucleus. The protein resides in the cytoplasm. Its subcellular location is the cytoskeleton. It is found in the microtubule organizing center. The protein localises to the centrosome. It localises to the spindle pole. The protein resides in the midbody. Functionally, component of the CTLH E3 ubiquitin-protein ligase complex that selectively accepts ubiquitin from UBE2H and mediates ubiquitination and subsequent proteasomal degradation of the transcription factor HBP1. Required for normal cell proliferation. The sequence is that of Protein yippee-like 5 (YPEL5) from Macaca fascicularis (Crab-eating macaque).